We begin with the raw amino-acid sequence, 237 residues long: MRPSGRELNEMRPVSIETGFTKHAEGSALIKIGDTHVLCTATIEDRVPPFIKGSGLGWVTAEYGMLPRATNTRMRRESTAGKQGGRTVEIQRLIGRSLRAGVDRVALGERQITVDCDVLQADGGTRCASITGGWVALRLAVNKLMKAGDVISDPLVDPVAAISCGIYAGQPVMDLDYPEDSEAGVDGNFIMTGSKQLIEVQMSAEGATFSRDQMNQLMDLAEKGVGELVAAQKAATA.

Residues arginine 86 and 124–126 (GTR) each bind phosphate.

This sequence belongs to the RNase PH family. In terms of assembly, homohexameric ring arranged as a trimer of dimers.

The enzyme catalyses tRNA(n+1) + phosphate = tRNA(n) + a ribonucleoside 5'-diphosphate. In terms of biological role, phosphorolytic 3'-5' exoribonuclease that plays an important role in tRNA 3'-end maturation. Removes nucleotide residues following the 3'-CCA terminus of tRNAs; can also add nucleotides to the ends of RNA molecules by using nucleoside diphosphates as substrates, but this may not be physiologically important. Probably plays a role in initiation of 16S rRNA degradation (leading to ribosome degradation) during starvation. The chain is Ribonuclease PH from Roseobacter denitrificans (strain ATCC 33942 / OCh 114) (Erythrobacter sp. (strain OCh 114)).